A 329-amino-acid chain; its full sequence is L-lactate dehydrogenase (329 aa).

Residues Val18, Glu39, Lys46, Tyr71, and 85–86 each bind NAD(+); that span reads GA. Residues Gln88 and Arg94 each coordinate substrate. Residues Ser107, 124 to 126, and Ser149 contribute to the NAD(+) site; that span reads AAN. 126-129 is a binding site for substrate; sequence NPVD. 154-157 is a substrate binding site; sequence DSAR. Arg159 and His174 together coordinate beta-D-fructose 1,6-bisphosphate. His181 (proton acceptor) is an active-site residue. Residue Tyr226 is modified to Phosphotyrosine. Thr235 is a binding site for substrate.

It belongs to the LDH/MDH superfamily. LDH family. In terms of assembly, homotetramer.

It is found in the cytoplasm. It catalyses the reaction (S)-lactate + NAD(+) = pyruvate + NADH + H(+). It participates in fermentation; pyruvate fermentation to lactate; (S)-lactate from pyruvate: step 1/1. With respect to regulation, allosterically activated by fructose 1,6-bisphosphate (FBP). Its function is as follows. Catalyzes the conversion of lactate to pyruvate. This chain is L-lactate dehydrogenase, found in Streptococcus agalactiae serotype V (strain ATCC BAA-611 / 2603 V/R).